The following is a 254-amino-acid chain: 5-oxoprolinase subunit A (254 aa).

It belongs to the LamB/PxpA family. In terms of assembly, forms a complex composed of PxpA, PxpB and PxpC.

The catalysed reaction is 5-oxo-L-proline + ATP + 2 H2O = L-glutamate + ADP + phosphate + H(+). Functionally, catalyzes the cleavage of 5-oxoproline to form L-glutamate coupled to the hydrolysis of ATP to ADP and inorganic phosphate. The sequence is that of 5-oxoprolinase subunit A from Bacillus mycoides (strain KBAB4) (Bacillus weihenstephanensis).